The chain runs to 250 residues: Acetylglutamate kinase (250 aa).

Substrate-binding positions include 41–42 (GG), Arg-63, and Asn-156.

The protein belongs to the acetylglutamate kinase family. ArgB subfamily.

It is found in the cytoplasm. The catalysed reaction is N-acetyl-L-glutamate + ATP = N-acetyl-L-glutamyl 5-phosphate + ADP. Its pathway is amino-acid biosynthesis; L-arginine biosynthesis; N(2)-acetyl-L-ornithine from L-glutamate: step 2/4. Functionally, catalyzes the ATP-dependent phosphorylation of N-acetyl-L-glutamate. This Listeria welshimeri serovar 6b (strain ATCC 35897 / DSM 20650 / CCUG 15529 / CIP 8149 / NCTC 11857 / SLCC 5334 / V8) protein is Acetylglutamate kinase.